A 122-amino-acid polypeptide reads, in one-letter code: ATP synthase epsilon chain (122 aa).

It belongs to the ATPase epsilon chain family. In terms of assembly, F-type ATPases have 2 components, CF(1) - the catalytic core - and CF(0) - the membrane proton channel. CF(1) has five subunits: alpha(3), beta(3), gamma(1), delta(1), epsilon(1). CF(0) has three main subunits: a, b and c.

The protein resides in the cell membrane. Its function is as follows. Produces ATP from ADP in the presence of a proton gradient across the membrane. The sequence is that of ATP synthase epsilon chain from Rhodococcus opacus (strain B4).